The chain runs to 123 residues: MQRSQRLRSPRDFRRVREGGRTWSHPLLVLSVAPARANRVRCGIVVRKSLGTAVERNRYKRQVREATRLVYDQIRPGWDVIFIVRAGFRTAAWEQIQQAVSRLLQQAQLWHDREQPSQEDRHG.

This sequence belongs to the RnpA family. As to quaternary structure, consists of a catalytic RNA component (M1 or rnpB) and a protein subunit.

The enzyme catalyses Endonucleolytic cleavage of RNA, removing 5'-extranucleotides from tRNA precursor.. In terms of biological role, RNaseP catalyzes the removal of the 5'-leader sequence from pre-tRNA to produce the mature 5'-terminus. It can also cleave other RNA substrates such as 4.5S RNA. The protein component plays an auxiliary but essential role in vivo by binding to the 5'-leader sequence and broadening the substrate specificity of the ribozyme. The protein is Ribonuclease P protein component of Herpetosiphon aurantiacus (strain ATCC 23779 / DSM 785 / 114-95).